A 128-amino-acid chain; its full sequence is Small ribosomal subunit protein uS9 (128 aa).

The disordered stretch occupies residues 106–128; that stretch reads PRVVERKKPGRPKARKRFQFSKR. Positions 113–128 are enriched in basic residues; it reads KPGRPKARKRFQFSKR.

The protein belongs to the universal ribosomal protein uS9 family.

The chain is Small ribosomal subunit protein uS9 from Porphyromonas gingivalis (strain ATCC 33277 / DSM 20709 / CIP 103683 / JCM 12257 / NCTC 11834 / 2561).